A 610-amino-acid chain; its full sequence is Elongation factor 4 (610 aa).

In terms of domain architecture, tr-type G spans 11 to 193; the sequence is EKIRNFSIIA…QIVEKVPAPT (183 aa). Residues 23–28 and 140–143 each bind GTP; these read DHGKST and NKID.

Belongs to the TRAFAC class translation factor GTPase superfamily. Classic translation factor GTPase family. LepA subfamily.

Its subcellular location is the cell membrane. It catalyses the reaction GTP + H2O = GDP + phosphate + H(+). Its function is as follows. Required for accurate and efficient protein synthesis under certain stress conditions. May act as a fidelity factor of the translation reaction, by catalyzing a one-codon backward translocation of tRNAs on improperly translocated ribosomes. Back-translocation proceeds from a post-translocation (POST) complex to a pre-translocation (PRE) complex, thus giving elongation factor G a second chance to translocate the tRNAs correctly. Binds to ribosomes in a GTP-dependent manner. This is Elongation factor 4 from Streptococcus pyogenes serotype M12 (strain MGAS9429).